We begin with the raw amino-acid sequence, 551 residues long: Putative transport protein HI_0035 (551 aa).

Transmembrane regions (helical) follow at residues 4–24 (IAIT…IGHW), 28–48 (GVGL…HFTN), 65–85 (FGLI…FFSS), 95–115 (AFAI…HKIA), and 157–177 (VSYA…MWLI). RCK C-terminal domains follow at residues 191–275 (RFNA…IIGH) and 277–360 (VDAP…VIGN). A run of 6 helical transmembrane segments spans residues 370–390 (MLPV…PFYI), 402–424 (AGGP…LYWF), 438–458 (IVLF…DTLV), 463–483 (LEWM…VGTI), 492–512 (YLTI…LAFA), and 529–549 (VYPL…VLLW).

The protein belongs to the AAE transporter (TC 2.A.81) family. YidE subfamily.

The protein localises to the cell membrane. This chain is Putative transport protein HI_0035, found in Haemophilus influenzae (strain ATCC 51907 / DSM 11121 / KW20 / Rd).